A 386-amino-acid polypeptide reads, in one-letter code: S-adenosylmethionine synthase (386 aa).

Histidine 16 provides a ligand contact to ATP. Mg(2+) is bound at residue aspartate 18. Glutamate 44 is a K(+) binding site. Positions 57 and 100 each coordinate L-methionine. The flexible loop stretch occupies residues 100 to 110; that stretch reads QSRDIAQGVDR. Residues 165-167, aspartate 240, 246-247, alanine 263, and lysine 267 each bind ATP; these read DAK and RK. Aspartate 240 is an L-methionine binding site. An L-methionine-binding site is contributed by lysine 271.

It belongs to the AdoMet synthase family. Homotetramer; dimer of dimers. Mg(2+) is required as a cofactor. K(+) serves as cofactor.

The protein resides in the cytoplasm. It catalyses the reaction L-methionine + ATP + H2O = S-adenosyl-L-methionine + phosphate + diphosphate. It functions in the pathway amino-acid biosynthesis; S-adenosyl-L-methionine biosynthesis; S-adenosyl-L-methionine from L-methionine: step 1/1. Catalyzes the formation of S-adenosylmethionine (AdoMet) from methionine and ATP. The overall synthetic reaction is composed of two sequential steps, AdoMet formation and the subsequent tripolyphosphate hydrolysis which occurs prior to release of AdoMet from the enzyme. The sequence is that of S-adenosylmethionine synthase from Francisella tularensis subsp. holarctica (strain FTNF002-00 / FTA).